We begin with the raw amino-acid sequence, 89 residues long: Small ribosomal subunit protein bS20 (89 aa).

A disordered region spans residues 1–26; that stretch reads MANSAQARKRARQADGQRSHNASLRS.

Belongs to the bacterial ribosomal protein bS20 family.

Binds directly to 16S ribosomal RNA. This chain is Small ribosomal subunit protein bS20, found in Dechloromonas aromatica (strain RCB).